A 99-amino-acid polypeptide reads, in one-letter code: Ubiquitin-related modifier 1 (99 aa).

1-thioglycine is present on Gly99. A Glycyl lysine isopeptide (Gly-Lys) (interchain with K-? in acceptor proteins) cross-link involves residue Gly99.

The protein belongs to the URM1 family. Post-translationally, C-terminal thiocarboxylation occurs in 2 steps, it is first acyl-adenylated (-COAMP) via the hesA/moeB/thiF part of UBA4, then thiocarboxylated (-COSH) via the rhodanese domain of UBA4.

It is found in the cytoplasm. It functions in the pathway tRNA modification; 5-methoxycarbonylmethyl-2-thiouridine-tRNA biosynthesis. Functionally, acts as a sulfur carrier required for 2-thiolation of mcm(5)S(2)U at tRNA wobble positions of cytosolic tRNA(Lys), tRNA(Glu) and tRNA(Gln). Serves as sulfur donor in tRNA 2-thiolation reaction by being thiocarboxylated (-COSH) at its C-terminus by the MOCS3 homolog UBA4. The sulfur is then transferred to tRNA to form 2-thiolation of mcm(5)S(2)U. Prior mcm(5) tRNA modification by the elongator complex is required for 2-thiolation. Also acts as a ubiquitin-like protein (UBL) that is covalently conjugated via an isopeptide bond to lysine residues of target proteins such as AHP1. The thiocarboxylated form serves as substrate for conjugation and oxidative stress specifically induces the formation of UBL-protein conjugates. This chain is Ubiquitin-related modifier 1, found in Yarrowia lipolytica (strain CLIB 122 / E 150) (Yeast).